A 21-amino-acid chain; its full sequence is Protopolybiakinin-1 (21 aa).

A compositionally biased stretch (basic residues) spans 1–11; it reads DKNKKPIRVGG. Residues 1–21 are disordered; sequence DKNKKPIRVGGRRPPGFTPFR.

It belongs to the bradykinin-related peptide family. As to expression, expressed by the venom gland.

It is found in the secreted. Functionally, causes constriction of the isolated rat ileum muscles (is 13-fold less potent than bradykinin (BK)), as well as degranulation of mast cells (is 7-fold more potent than BK). In vivo, causes algesic effects. Muscle constriction and algesic effects are partially mediated by bradykinin receptors B2 (BDKRB2). The protein is Protopolybiakinin-1 of Protopolybia exigua (Neotropical social wasp).